A 214-amino-acid polypeptide reads, in one-letter code: MLELRMKQANNCALIVVDVQNGFTPGGNLAVAGADQIIPCINQLGTCFDTIVITQDWHPHNHISFASNHLGKQPFDTIQLPYGPQVLWPSHCVQGTQDAELHPALDLPTAQLIIRKGFHRNIDSYSAFMEADRHTSTGLAGYLKERGIDTVYIVGIATDFCVAWTAIDASKAGLNSYVIIDACKAIDMNGSLQHAWQEMLASGVQRISSRNILV.

Asp18 (proton acceptor) is an active-site residue. Positions 56, 58, 62, and 91 each coordinate a divalent metal cation. Residue Lys116 is part of the active site. Cys161 acts as the Nucleophile in catalysis.

The protein belongs to the isochorismatase family. The cofactor is a divalent metal cation.

It catalyses the reaction nicotinamide + H2O = nicotinate + NH4(+). Its pathway is cofactor biosynthesis; nicotinate biosynthesis; nicotinate from nicotinamide: step 1/1. Functionally, catalyzes the deamidation of nicotinamide (NAM) into nicotinate (Na). Functions in the deamidating salvage pathway for production of NAD from nicotinamide. The polypeptide is Nicotinamidase (Acinetobacter baylyi (strain ATCC 33305 / BD413 / ADP1)).